Consider the following 343-residue polypeptide: GTPase Obg (343 aa).

Residues 1–157 (MKFIDEVSIS…IEVRLELKLI (157 aa)) form the Obg domain. The interval 13 to 44 (SGRGGPGCVSFRRESMQARGGPDGGNGGKGGD) is disordered. The segment covering 33-43 (GPDGGNGGKGG) has biased composition (gly residues). Residues 158–338 (ADVGIVGFPN…FVQELARQIL (181 aa)) form the OBG-type G domain. GTP is bound by residues 164–171 (GFPNAGKS), 189–193 (FTTLT), 211–214 (DIPG), 290–293 (NKID), and 319–321 (SAV). Residues Ser-171 and Thr-191 each contribute to the Mg(2+) site.

Belongs to the TRAFAC class OBG-HflX-like GTPase superfamily. OBG GTPase family. In terms of assembly, monomer. Requires Mg(2+) as cofactor.

The protein resides in the cytoplasm. An essential GTPase which binds GTP, GDP and possibly (p)ppGpp with moderate affinity, with high nucleotide exchange rates and a fairly low GTP hydrolysis rate. Plays a role in control of the cell cycle, stress response, ribosome biogenesis and in those bacteria that undergo differentiation, in morphogenesis control. This chain is GTPase Obg, found in Bdellovibrio bacteriovorus (strain ATCC 15356 / DSM 50701 / NCIMB 9529 / HD100).